Consider the following 574-residue polypeptide: Phosphatidylinositol 4-kinase gamma 3 (574 aa).

Ubiquitin-like domains are found at residues 32–109 (PILV…SDLQ) and 110–188 (AISV…AKVR). One can recognise a PI3K/PI4K catalytic domain in the interval 257-555 (GNGPIRSSDG…IVPTETTEDE (299 aa)). The tract at residues 263-269 (SSDGSGG) is G-loop. Residues 264–270 (SDGSGGA), K286, and 381–384 (QMFV) each bind ATP. A catalytic loop region spans residues 414–422 (ANADRHAGN). The tract at residues 438–464 (PIDHGYCFPNKFEDCTFEWLYWPQAKE) is activation loop. ATP is bound at residue D440.

It belongs to the PI3/PI4-kinase family. Type II PI4K subfamily.

It carries out the reaction a 1,2-diacyl-sn-glycero-3-phospho-(1D-myo-inositol) + ATP = a 1,2-diacyl-sn-glycero-3-phospho-(1D-myo-inositol 4-phosphate) + ADP + H(+). In terms of biological role, the phosphorylation of phosphatidylinositol (PI) to PI4P is the first committed step in the generation of phosphatidylinositol 4,5-bisphosphate (PIP2), a precursor of the second messenger inositol 1,4,5-trisphosphate (InsP3). This is Phosphatidylinositol 4-kinase gamma 3 (PI4KG3) from Arabidopsis thaliana (Mouse-ear cress).